We begin with the raw amino-acid sequence, 427 residues long: Glutamyl-tRNA reductase (427 aa).

Residues 49-52, S101, 106-108, and Q112 contribute to the substrate site; these read TCNR and EPQ. Catalysis depends on C50, which acts as the Nucleophile. 181–186 contributes to the NADP(+) binding site; it reads GAGETI. The tract at residues 407–427 is disordered; the sequence is FPATPGYRHPPVRPDDADPAP. The segment covering 418–427 has biased composition (basic and acidic residues); sequence VRPDDADPAP.

It belongs to the glutamyl-tRNA reductase family. In terms of assembly, homodimer.

It carries out the reaction (S)-4-amino-5-oxopentanoate + tRNA(Glu) + NADP(+) = L-glutamyl-tRNA(Glu) + NADPH + H(+). It functions in the pathway porphyrin-containing compound metabolism; protoporphyrin-IX biosynthesis; 5-aminolevulinate from L-glutamyl-tRNA(Glu): step 1/2. Its function is as follows. Catalyzes the NADPH-dependent reduction of glutamyl-tRNA(Glu) to glutamate 1-semialdehyde (GSA). This is Glutamyl-tRNA reductase from Stenotrophomonas maltophilia (strain R551-3).